Consider the following 554-residue polypeptide: Solute carrier family 22 member 1 (554 aa).

At 1-21 (MPTVDDVLEQVGEFGWFQKRT) the chain is on the cytoplasmic side. Residues 22 to 42 (FLFLCLISAILAPIYLGIVFL) form a helical membrane-spanning segment. Residues 43–149 (GFTPDHRCRS…LVCADAWKVD (107 aa)) are Extracellular-facing. Asn-71 carries N-linked (GlcNAc...) asparagine glycosylation. Residues 150-170 (LFQSCVNLGFFLGSLGVGYIA) form a helical membrane-spanning segment. Residues 171–176 (DRFGRK) are Cytoplasmic-facing. Residues 177–197 (LCLLLTTLINAVSGVLTAVAP) form a helical membrane-spanning segment. The Extracellular portion of the chain corresponds to 198-206 (DYTSMLLFR). A helical membrane pass occupies residues 207–229 (LLQGLVSKGSWMSGYTLITEFVG). The Cytoplasmic segment spans residues 230–237 (SGYRRTVA). Residues 238-258 (ILYQVAFSVGLVALSGVAYAI) traverse the membrane as a helical segment. Topologically, residues 259-262 (PNWR) are extracellular. A helical membrane pass occupies residues 263–283 (WLQLTVSLPTFLCLFYYWCVP). Positions 283-287 (PESPR) match the Proline-rich sequence motif. Residues 284-347 (ESPRWLLSQK…FRTPNLRKHT (64 aa)) lie on the Cytoplasmic side of the membrane. At Ser-333 the chain carries Phosphoserine. A helical transmembrane segment spans residues 348 to 368 (FILMFLWFTCSVLYQGLILHM). Residues 369–374 (GATGGN) lie on the Extracellular side of the membrane. A helical membrane pass occupies residues 375–395 (VYLDFFYSSLVEFPAAFVILV). Residues 396–402 (TIDRVGR) lie on the Cytoplasmic side of the membrane. A helical membrane pass occupies residues 403–423 (IYPMAASNLAAGVASVILIFV). Topologically, residues 424-431 (PQDLHWLT) are extracellular. A helical membrane pass occupies residues 432–452 (IVLSCVGRMGATIVLQMICLV). At 453-464 (NAELYPTFVRNL) the chain is on the cytoplasmic side. Residues 465–485 (GVMVCSALCDVGGIITPFMVF) traverse the membrane as a helical segment. The Extracellular portion of the chain corresponds to 486-492 (RLMEVWQ). Residues 493–513 (PLPLIVFGVLGLLAGGMTLLL) traverse the membrane as a helical segment. At 514 to 554 (PETKGVALPETIEDAENLRRKAKPKESKIYLQVQTSELKGP) the chain is on the cytoplasmic side.

It belongs to the major facilitator (TC 2.A.1) superfamily. Organic cation transporter (TC 2.A.1.19) family. Post-translationally, phosphorylated. Expressed in kidney, liver and intestine.

It is found in the basolateral cell membrane. The protein resides in the apical cell membrane. It localises to the lateral cell membrane. The protein localises to the basal cell membrane. The catalysed reaction is 1-methylnicotinamide(out) = 1-methylnicotinamide(in). It carries out the reaction dopamine(out) = dopamine(in). The enzyme catalyses serotonin(out) = serotonin(in). It catalyses the reaction (R)-adrenaline(out) = (R)-adrenaline(in). The catalysed reaction is (R)-noradrenaline(out) = (R)-noradrenaline(in). It carries out the reaction histamine(out) = histamine(in). The enzyme catalyses guanidine(out) = guanidine(in). It catalyses the reaction choline(out) = choline(in). The catalysed reaction is acetylcholine(in) = acetylcholine(out). It carries out the reaction thiamine(in) = thiamine(out). The enzyme catalyses spermidine(in) = spermidine(out). It catalyses the reaction agmatine(out) = agmatine(in). The catalysed reaction is putrescine(out) = putrescine(in). It carries out the reaction (R)-carnitine(in) = (R)-carnitine(out). The enzyme catalyses O-isobutanoyl-(R)-carnitine(in) = O-isobutanoyl-(R)-carnitine(out). It catalyses the reaction O-acetyl-(R)-carnitine(in) = O-acetyl-(R)-carnitine(out). The catalysed reaction is O-3-hydroxybutanoyl-(R)-carnitine(in) = O-3-hydroxybutanoyl-(R)-carnitine(out). It carries out the reaction O-propanoyl-(R)-carnitine(in) = O-propanoyl-(R)-carnitine(out). The enzyme catalyses O-butanoyl-(R)-carnitine(in) = O-butanoyl-(R)-carnitine(out). It catalyses the reaction O-2-methylbutanoyl-(R)-carnitine(in) = O-2-methylbutanoyl-(R)-carnitine(out). The catalysed reaction is O-3-methylbutanoyl-(R)-carnitine(in) = O-3-methylbutanoyl-(R)-carnitine(out). It carries out the reaction O-hexanoyl-(R)-carnitine(in) = O-hexanoyl-(R)-carnitine(out). The enzyme catalyses L-histidyl-L-proline diketopiperazine(in) = L-histidyl-L-proline diketopiperazine(out). It catalyses the reaction (R)-salsolinol(in) = (R)-salsolinol(out). The catalysed reaction is prostaglandin F2alpha(out) = prostaglandin F2alpha(in). It carries out the reaction prostaglandin E2(out) = prostaglandin E2(in). Phosphorylation of the transporter leads to changes in its substrate affinity, resulting in a regulation of the transport activity. In contrast with rat ortholog, ASP uptake is inhibited by protein kinase A (PKA) and C (PKC) activation. ASP uptake is also endogenously activated by calmodulin, the calmodulin-dependent kinase II and LCK tyrosine kinase. Inhibited by cGMP, most likely through a cGMP-binding protein that interacts with OCT1. Functionally, electrogenic voltage-dependent transporter that mediates the transport of a variety of organic cations such as endogenous bioactive amines, cationic drugs and xenobiotics. Functions as a pH- and Na(+)-independent, bidirectional transporter. Cation cellular uptake or release is driven by the electrochemical potential (i.e. membrane potential and concentration gradient) and substrate selectivity. Hydrophobicity is a major requirement for recognition in polyvalent substrates and inhibitors. Primarily expressed in the basolateral membrane of hepatocytes and proximal tubules and involved in the uptake and disposition of cationic compounds from the blood by hepatic and renal clearance. Most likely functions as an uptake carrier in enterocytes contributing to the intestinal elimination of organic cations from the systemic circulation. Transports endogenous monoamines such as N-1-methylnicotinamide (NMN), guanidine, neurotransmitters dopamine, serotonin, noradrenaline, adrenaline and histamine, and quaternary ammonium compound such as choline. Also transports natural polyamines such as spermidine, agmatine and putrescine at low affinity, but relatively high turnover. Involved in the hepatic and intestinal uptake of the vitamin B1/thiamine, hence regulating hepatic lipid and energy metabolism. Contributes to the influx and efflux of fatty acid carriers carnitines and acylcarnitines across the basolateral membrane of hepatocytes, from the liver to the systemic circulation and inversely and may be involved in regulating the systemic availability of hepatic acylcarnitines. Also capable of transporting non-amine endogenous compounds such as prostaglandin E2 (PGE2) and prostaglandin F2-alpha (PGF2-alpha). May contribute to the transport of cationic compounds in testes across the blood-testis-barrier. Also mediates the uptake of xenobiotics tributylmethylammonium (TBuMA), quinidine, N-methyl-quinine (NMQ), N-methyl-quinidine (NMQD) N-(4,4-azo-n-pentyl)-quinuclidine (APQ), azidoprocainamide methoiodide (AMP), N-(4,4-azo-n-pentyl)-21-deoxyajmalinium (APDA) and 4-(4-(dimethylamino)styryl)-N-methylpyridinium (ASP). The polypeptide is Solute carrier family 22 member 1 (SLC22A1) (Oryctolagus cuniculus (Rabbit)).